Reading from the N-terminus, the 1000-residue chain is SEC23-interacting protein (1000 aa).

Positions 1-367 (MAERKPNGGS…YTEEFSEKLE (367 aa)) are interaction with SEC23A. Residues 133-252 (FSPSISKAQP…QQVPARPGAP (120 aa)) are disordered. Low complexity predominate over residues 154–167 (SYLPSQPSSLPPSY). Residues 207–218 (PGPPAHPPPSGP) show a composition bias toward pro residues. Residues 235-246 (SSVQSPAQQQVP) show a composition bias toward low complexity. Positions 644 to 707 (KEVLTLQETL…NFVEHKAAKL (64 aa)) constitute an SAM domain. Positions 716 to 748 (AVAATSTKGQEQSAQKTKDMASLPSESNEPKRK) are disordered. Residues Ser-737 and Ser-926 each carry the phosphoserine modification. In terms of domain architecture, DDHD spans 779-989 (LDFEPEIFFA…ALLLLKEIYR (211 aa)).

This sequence belongs to the PA-PLA1 family. As to quaternary structure, interacts with SEC23A. As to expression, ubiquitously expressed with stronger levels detected in heart, liver and skeletal muscle.

Its subcellular location is the cytoplasmic vesicle. The protein resides in the COPII-coated vesicle membrane. It localises to the endoplasmic reticulum. Its function is as follows. Plays a role in the organization of endoplasmic reticulum exit sites. Specifically binds to phosphatidylinositol 3-phosphate (PI(3)P), phosphatidylinositol 4-phosphate (PI(4)P) and phosphatidylinositol 5-phosphate (PI(5)P). In Homo sapiens (Human), this protein is SEC23-interacting protein (SEC23IP).